A 707-amino-acid chain; its full sequence is Polyribonucleotide nucleotidyltransferase (707 aa).

Residues aspartate 485 and aspartate 491 each coordinate Mg(2+). The KH domain occupies 552–611; it reads PRIHTMKINSDKIKDVIGKGGAVIRALTEETGTTIEIEDDGTIKIAATEGAAAKEAIRRI. The S1 motif domain maps to 621–689; sequence GRIYTGKVMR…RQGRIRLSMK (69 aa).

It belongs to the polyribonucleotide nucleotidyltransferase family. As to quaternary structure, component of the RNA degradosome, which is a multiprotein complex involved in RNA processing and mRNA degradation. The cofactor is Mg(2+).

It localises to the cytoplasm. It carries out the reaction RNA(n+1) + phosphate = RNA(n) + a ribonucleoside 5'-diphosphate. Its function is as follows. Involved in mRNA degradation. Catalyzes the phosphorolysis of single-stranded polyribonucleotides processively in the 3'- to 5'-direction. The chain is Polyribonucleotide nucleotidyltransferase from Photobacterium profundum (strain SS9).